A 127-amino-acid chain; its full sequence is Calcitonin gene-related peptide 2 (127 aa).

A signal peptide spans 1–25; it reads MGFRKFSPFLALSILVLYQAGSLQA. A propeptide spanning residues 26 to 79 is cleaved from the precursor; sequence APFRSALESSPDPATLSKEDARLLLAALVQDYVQMKASELKQEQETQGSSSAAQ. Residues Cys-83 and Cys-88 are joined by a disulfide bond. Phe-118 is modified (phenylalanine amide). Positions 124 to 127 are excised as a propeptide; it reads DLQA.

This sequence belongs to the calcitonin family. Expressed in spinal cord, pituitary and thalamus.

It is found in the secreted. Its function is as follows. CALCB/CGRP2 is a peptide hormone that induces vasodilation mediated by the CALCRL-RAMP1 receptor complex. Dilates a variety of vessels including the coronary, cerebral and systemic vasculature. Its abundance in the CNS also points toward a neurotransmitter or neuromodulator role. In Homo sapiens (Human), this protein is Calcitonin gene-related peptide 2.